The sequence spans 165 residues: Lipoprotein signal peptidase (165 aa).

The next 2 membrane-spanning stretches (helical) occupy residues 64-84 (LGRW…GAWM) and 88-108 (GSRL…GNAV). Residues Asp118 and Asp136 contribute to the active site. The chain crosses the membrane as a helical span at residues 128–148 (SWYVFNVADAGIVAGVAGLLV).

Belongs to the peptidase A8 family.

Its subcellular location is the cell inner membrane. It catalyses the reaction Release of signal peptides from bacterial membrane prolipoproteins. Hydrolyzes -Xaa-Yaa-Zaa-|-(S,diacylglyceryl)Cys-, in which Xaa is hydrophobic (preferably Leu), and Yaa (Ala or Ser) and Zaa (Gly or Ala) have small, neutral side chains.. Its pathway is protein modification; lipoprotein biosynthesis (signal peptide cleavage). Its function is as follows. This protein specifically catalyzes the removal of signal peptides from prolipoproteins. The chain is Lipoprotein signal peptidase from Methylobacterium sp. (strain 4-46).